The sequence spans 360 residues: Blue-light-activated histidine kinase 1 (360 aa).

In terms of domain architecture, PAS spans 38–109 (LFLETTQQTR…KLREGIAAER (72 aa)). Cys-85 is modified (S-4a-FMN cysteine). Residues 109 to 163 (RYTVVDLLNYRKDGIPFWNAVHVGPIYGEDGTLQYFYGSQWDITDIVAERRKAET) form the PAC domain. His-173 is subject to Phosphohistidine; by autocatalysis. The tract at residues 260 to 303 (RSVTALGLALHELATNAVKYGALSVDAGRVEISWSREDGDVTLV) is HWE histidine kinase domain.

Post-translationally, FMN binds covalently to cysteine after exposure to blue light and this bond is spontaneously broken in the dark.

The enzyme catalyses ATP + protein L-histidine = ADP + protein N-phospho-L-histidine.. Functionally, photosensitive kinase that is involved in increased bacterial virulence upon exposure to light. In Erythrobacter litoralis (strain HTCC2594), this protein is Blue-light-activated histidine kinase 1.